The sequence spans 562 residues: Arginine--tRNA ligase (562 aa).

The 'HIGH' region signature appears at 121 to 131 (PNIAKPMGMGH).

It belongs to the class-I aminoacyl-tRNA synthetase family. Monomer.

Its subcellular location is the cytoplasm. It carries out the reaction tRNA(Arg) + L-arginine + ATP = L-arginyl-tRNA(Arg) + AMP + diphosphate. This Limosilactobacillus fermentum (strain NBRC 3956 / LMG 18251) (Lactobacillus fermentum) protein is Arginine--tRNA ligase.